The chain runs to 272 residues: Cytochrome b-c1 complex subunit Rieske-2, mitochondrial (272 aa).

Residues 1–60 (MLRIAGRRASSLSRWPVRSVAPSSSAFISANHFSSDDDSSSPRSISPSLASVFLHHTRGF) constitute a mitochondrion transit peptide. The Mitochondrial matrix portion of the chain corresponds to 61-109 (SSNSVSHAHDMGLVPDLPPTVAAIKNPTSKIVYDEHNHERYPPGDPSKR). Residues 110-132 (AFAYFVLTGGRFVYASLVRLLIL) form a helical membrane-spanning segment. Over 133-272 (KFVLSMSASK…FLEENKLLIG (140 aa)) the chain is Mitochondrial intermembrane. One can recognise a Rieske domain in the interval 182-270 (INLANSVDLG…YSFLEENKLL (89 aa)). Positions 215, 217, 234, and 237 each coordinate [2Fe-2S] cluster. The cysteines at positions 220 and 236 are disulfide-linked.

This sequence belongs to the Rieske iron-sulfur protein family. In terms of assembly, component of the ubiquinol-cytochrome c oxidoreductase (cytochrome b-c1 complex, complex III, CIII), a multisubunit enzyme composed of 3 respiratory subunits cytochrome b, cytochrome c1 and Rieske protein, 2 core protein subunits, and several low-molecular weight protein subunits. The complex exists as an obligatory dimer and forms supercomplexes (SCs) in the inner mitochondrial membrane with cytochrome c oxidase (complex IV, CIV). [2Fe-2S] cluster serves as cofactor. In terms of tissue distribution, high levels are seen in the flowers while a low level expression is seen in the roots, leaves and stems.

Its subcellular location is the mitochondrion inner membrane. It carries out the reaction a quinol + 2 Fe(III)-[cytochrome c](out) = a quinone + 2 Fe(II)-[cytochrome c](out) + 2 H(+)(out). Functionally, component of the ubiquinol-cytochrome c oxidoreductase, a multisubunit transmembrane complex that is part of the mitochondrial electron transport chain which drives oxidative phosphorylation. The respiratory chain contains 3 multisubunit complexes succinate dehydrogenase (complex II, CII), ubiquinol-cytochrome c oxidoreductase (cytochrome b-c1 complex, complex III, CIII) and cytochrome c oxidase (complex IV, CIV), that cooperate to transfer electrons derived from NADH and succinate to molecular oxygen, creating an electrochemical gradient over the inner membrane that drives transmembrane transport and the ATP synthase. The cytochrome b-c1 complex catalyzes electron transfer from ubiquinol to cytochrome c, linking this redox reaction to translocation of protons across the mitochondrial inner membrane, with protons being carried across the membrane as hydrogens on the quinol. In the process called Q cycle, 2 protons are consumed from the matrix, 4 protons are released into the intermembrane space and 2 electrons are passed to cytochrome c. The Rieske protein is a catalytic core subunit containing a [2Fe-2S] iron-sulfur cluster. It cycles between 2 conformational states during catalysis to transfer electrons from the quinol bound in the Q(0) site in cytochrome b to cytochrome c1. This Nicotiana tabacum (Common tobacco) protein is Cytochrome b-c1 complex subunit Rieske-2, mitochondrial.